The sequence spans 685 residues: Polyphosphate kinase (685 aa).

Asparagine 45 provides a ligand contact to ATP. The Mg(2+) site is built by arginine 375 and arginine 405. Residue histidine 435 is the Phosphohistidine intermediate of the active site. ATP-binding residues include tyrosine 468, arginine 564, and histidine 592.

Belongs to the polyphosphate kinase 1 (PPK1) family. The cofactor is Mg(2+). Post-translationally, an intermediate of this reaction is the autophosphorylated ppk in which a phosphate is covalently linked to a histidine residue through a N-P bond.

It carries out the reaction [phosphate](n) + ATP = [phosphate](n+1) + ADP. Catalyzes the reversible transfer of the terminal phosphate of ATP to form a long-chain polyphosphate (polyP). In Neisseria meningitidis serogroup B (strain ATCC BAA-335 / MC58), this protein is Polyphosphate kinase.